The sequence spans 538 residues: Chaperonin GroEL (538 aa).

ATP contacts are provided by residues 29–32 (TIGP), 86–90 (DGTTT), glycine 413, 476–478 (NAA), and aspartate 492.

It belongs to the chaperonin (HSP60) family. As to quaternary structure, forms a cylinder of 14 subunits composed of two heptameric rings stacked back-to-back. Interacts with the co-chaperonin GroES.

The protein resides in the cytoplasm. The enzyme catalyses ATP + H2O + a folded polypeptide = ADP + phosphate + an unfolded polypeptide.. Its function is as follows. Together with its co-chaperonin GroES, plays an essential role in assisting protein folding. The GroEL-GroES system forms a nano-cage that allows encapsulation of the non-native substrate proteins and provides a physical environment optimized to promote and accelerate protein folding. The protein is Chaperonin GroEL of Staphylococcus aureus (strain bovine RF122 / ET3-1).